The primary structure comprises 38 residues: Large ribosomal subunit protein bL36 (38 aa).

Belongs to the bacterial ribosomal protein bL36 family.

This Streptococcus agalactiae serotype III (strain NEM316) protein is Large ribosomal subunit protein bL36.